The primary structure comprises 466 residues: ATP synthase subunit beta (466 aa).

148 to 155 (GGAGVGKT) contributes to the ATP binding site.

Belongs to the ATPase alpha/beta chains family. As to quaternary structure, F-type ATPases have 2 components, CF(1) - the catalytic core - and CF(0) - the membrane proton channel. CF(1) has five subunits: alpha(3), beta(3), gamma(1), delta(1), epsilon(1). CF(0) has three main subunits: a(1), b(2) and c(9-12). The alpha and beta chains form an alternating ring which encloses part of the gamma chain. CF(1) is attached to CF(0) by a central stalk formed by the gamma and epsilon chains, while a peripheral stalk is formed by the delta and b chains.

It localises to the cell inner membrane. It carries out the reaction ATP + H2O + 4 H(+)(in) = ADP + phosphate + 5 H(+)(out). Produces ATP from ADP in the presence of a proton gradient across the membrane. The catalytic sites are hosted primarily by the beta subunits. The protein is ATP synthase subunit beta of Xylella fastidiosa (strain M12).